The sequence spans 192 residues: UPF0301 protein Bmul_2524/BMULJ_00714 (192 aa).

It belongs to the UPF0301 (AlgH) family.

The chain is UPF0301 protein Bmul_2524/BMULJ_00714 from Burkholderia multivorans (strain ATCC 17616 / 249).